Reading from the N-terminus, the 439-residue chain is Xylose isomerase (439 aa).

Active-site residues include histidine 101 and aspartate 104. 7 residues coordinate Mg(2+): glutamate 232, glutamate 268, histidine 271, aspartate 296, aspartate 307, aspartate 309, and aspartate 339.

The protein belongs to the xylose isomerase family. As to quaternary structure, homotetramer. Mg(2+) is required as a cofactor.

Its subcellular location is the cytoplasm. It catalyses the reaction alpha-D-xylose = alpha-D-xylulofuranose. The sequence is that of Xylose isomerase from Photobacterium profundum (strain SS9).